The primary structure comprises 196 residues: Probable GTP-binding protein EngB (196 aa).

Residues 21–195 (DVSEICLIGR…YELINKLLGS (175 aa)) enclose the EngB-type G domain. Residues 29-36 (GRSNVGKS), 56-60 (GKTRL), 75-78 (DAPG), 142-145 (TKLD), and 174-176 (ISN) each bind GTP. Mg(2+)-binding residues include Ser-36 and Thr-58.

This sequence belongs to the TRAFAC class TrmE-Era-EngA-EngB-Septin-like GTPase superfamily. EngB GTPase family. Mg(2+) is required as a cofactor.

In terms of biological role, necessary for normal cell division and for the maintenance of normal septation. The protein is Probable GTP-binding protein EngB of Mycoplasma capricolum subsp. capricolum (strain California kid / ATCC 27343 / NCTC 10154).